The sequence spans 542 residues: CTP synthase (542 aa).

Positions 1–265 (MARYVFITGG…DDEVLAAFGI (265 aa)) are amidoligase domain. Residue S13 participates in CTP binding. A UTP-binding site is contributed by S13. ATP is bound by residues 14–19 (SLGKGI) and D71. Mg(2+)-binding residues include D71 and E139. CTP contacts are provided by residues 146–148 (DIE), 186–191 (KTKPTQ), and K222. UTP is bound by residues 186–191 (KTKPTQ) and K222. Residues 291–541 (TIAIVGKYTG…IEAATEQSRL (251 aa)) form the Glutamine amidotransferase type-1 domain. L-glutamine is bound at residue G353. C380 (nucleophile; for glutamine hydrolysis) is an active-site residue. L-glutamine contacts are provided by residues 381–384 (FGMQ), E404, and R469. Residues H514 and E516 contribute to the active site.

The protein belongs to the CTP synthase family. Homotetramer.

The catalysed reaction is UTP + L-glutamine + ATP + H2O = CTP + L-glutamate + ADP + phosphate + 2 H(+). It catalyses the reaction L-glutamine + H2O = L-glutamate + NH4(+). The enzyme catalyses UTP + NH4(+) + ATP = CTP + ADP + phosphate + 2 H(+). The protein operates within pyrimidine metabolism; CTP biosynthesis via de novo pathway; CTP from UDP: step 2/2. Allosterically activated by GTP, when glutamine is the substrate; GTP has no effect on the reaction when ammonia is the substrate. The allosteric effector GTP functions by stabilizing the protein conformation that binds the tetrahedral intermediate(s) formed during glutamine hydrolysis. Inhibited by the product CTP, via allosteric rather than competitive inhibition. Its function is as follows. Catalyzes the ATP-dependent amination of UTP to CTP with either L-glutamine or ammonia as the source of nitrogen. Regulates intracellular CTP levels through interactions with the four ribonucleotide triphosphates. This Rhizobium leguminosarum bv. trifolii (strain WSM2304) protein is CTP synthase.